The sequence spans 336 residues: MKYKDAGVNIDEGNKFVKMIKPFAEKTIKEGVLEGIGGFAALYEIKNYKNPVLVSSTDGVGTKLKIAFMMDKHDTVGIDLVAMCVNDVIVVGAKPLFFLDYFATGKLESEKAIQVIKGVAEGCEIAGCALIGGETAELPGFYKEGEYDLAGFCVGIVEKEEIIDTSSMAIGDVVIGLSSSGLHSNGYSLVRKVFFEKNNFSIEDYVPDIGKTLGEVLLTPTKIYVKSVEVLKGLKIKGMAHITGGGFIENIPRILRKGVSARIYKGSWEVPIIFDMIRRLGEIEEKEMYRTFNMGIGMVVIIDKEEVEKALKRLKEVGETAFVIGEIVEGEGGVIL.

It belongs to the AIR synthase family.

The protein resides in the cytoplasm. It catalyses the reaction 2-formamido-N(1)-(5-O-phospho-beta-D-ribosyl)acetamidine + ATP = 5-amino-1-(5-phospho-beta-D-ribosyl)imidazole + ADP + phosphate + H(+). The protein operates within purine metabolism; IMP biosynthesis via de novo pathway; 5-amino-1-(5-phospho-D-ribosyl)imidazole from N(2)-formyl-N(1)-(5-phospho-D-ribosyl)glycinamide: step 2/2. This chain is Phosphoribosylformylglycinamidine cyclo-ligase, found in Caldanaerobacter subterraneus subsp. tengcongensis (strain DSM 15242 / JCM 11007 / NBRC 100824 / MB4) (Thermoanaerobacter tengcongensis).